The primary structure comprises 878 residues: Phosphoenolpyruvate carboxylase (878 aa).

Active-site residues include His140 and Lys545.

The protein belongs to the PEPCase type 1 family. It depends on Mg(2+) as a cofactor.

It carries out the reaction oxaloacetate + phosphate = phosphoenolpyruvate + hydrogencarbonate. In terms of biological role, forms oxaloacetate, a four-carbon dicarboxylic acid source for the tricarboxylic acid cycle. The chain is Phosphoenolpyruvate carboxylase from Pseudomonas paraeruginosa (strain DSM 24068 / PA7) (Pseudomonas aeruginosa (strain PA7)).